The primary structure comprises 440 residues: Chromosome partition protein MukF (440 aa).

Residues 208-236 (LSETSGTLRELQDTLEAAGDKLQANLLRI) are leucine-zipper.

This sequence belongs to the MukF family. As to quaternary structure, interacts, and probably forms a ternary complex, with MukE and MukB via its C-terminal region. The complex formation is stimulated by calcium or magnesium. It is required for an interaction between MukE and MukB.

The protein resides in the cytoplasm. Its subcellular location is the nucleoid. Its function is as follows. Involved in chromosome condensation, segregation and cell cycle progression. May participate in facilitating chromosome segregation by condensation DNA from both sides of a centrally located replisome during cell division. Not required for mini-F plasmid partitioning. Probably acts via its interaction with MukB and MukE. Overexpression results in anucleate cells. It has a calcium binding activity. In Yersinia pestis, this protein is Chromosome partition protein MukF.